The primary structure comprises 71 residues: MAIQSKYSNAQVESIIAELLAVLEKHQSPTDLSLMALGNCVTHLLQKKVPAEAREVVAEQFAKALSRSVKS.

The protein belongs to the UPF0352 family.

The sequence is that of UPF0352 protein Spea_1764 from Shewanella pealeana (strain ATCC 700345 / ANG-SQ1).